The sequence spans 328 residues: Phenylalanine--tRNA ligase alpha subunit (328 aa).

Glu-245 provides a ligand contact to Mg(2+).

Belongs to the class-II aminoacyl-tRNA synthetase family. Phe-tRNA synthetase alpha subunit type 1 subfamily. Tetramer of two alpha and two beta subunits. Mg(2+) serves as cofactor.

The protein resides in the cytoplasm. The catalysed reaction is tRNA(Phe) + L-phenylalanine + ATP = L-phenylalanyl-tRNA(Phe) + AMP + diphosphate + H(+). This chain is Phenylalanine--tRNA ligase alpha subunit, found in Helicobacter pylori (strain G27).